The following is a 501-amino-acid chain: MNDIAAGTEQRSALPPELRRVHMVGIGGAGMSGIARILLSRGGEVSGSDAKESRGVLALRARGAQVRIGHDAGALDLLPGGPTAVVTTYAAIPKTNPELVEAQRRDIPVLLRPAVLASLMRGHRTLLVSGTHGKTSTTSMLIVALQHCGFDPSFAVGGELNEAGTNAHHGTGEIFVAEADESDGSLLQYDPDVAVVTNIESDHLDFFGSDAAYTQVFDDFADRLAAGGLLVVCLDDPGSRALAERVGPRLAERGVRVLGYGSGELADAPVPVGVRLHSWEPRDVGGVAQFQLGDEPAPRTLRLSVPGRHMALNALAALLAARAAGADLDEIIQGLEGFGGVHRRFQFVGRENGVRVFDDYAHHPTEVRAVLGAAAALVEQEARDGARSRQGRVIVVFQPHLYSRTATFATEFGAALSLADEVVVLDVYGAREKAMPGVNGALVAQAVTAPVHYQPDMSRVGRQVAGLALPGDVVITMGAGDVTMLGSQILDGLRARPQHGR.

130-136 (GTHGKTS) contributes to the ATP binding site.

It belongs to the MurCDEF family.

It localises to the cytoplasm. The catalysed reaction is UDP-N-acetyl-alpha-D-muramate + L-alanine + ATP = UDP-N-acetyl-alpha-D-muramoyl-L-alanine + ADP + phosphate + H(+). The protein operates within cell wall biogenesis; peptidoglycan biosynthesis. Its function is as follows. Cell wall formation. This Nocardia farcinica (strain IFM 10152) protein is UDP-N-acetylmuramate--L-alanine ligase.